A 122-amino-acid chain; its full sequence is Large ribosomal subunit protein uL14 (122 aa).

This sequence belongs to the universal ribosomal protein uL14 family. In terms of assembly, part of the 50S ribosomal subunit. Forms a cluster with proteins L3 and L19. In the 70S ribosome, L14 and L19 interact and together make contacts with the 16S rRNA in bridges B5 and B8.

Functionally, binds to 23S rRNA. Forms part of two intersubunit bridges in the 70S ribosome. The protein is Large ribosomal subunit protein uL14 of Thermoanaerobacter pseudethanolicus (strain ATCC 33223 / 39E) (Clostridium thermohydrosulfuricum).